The chain runs to 135 residues: Large ribosomal subunit protein bL19 (135 aa).

This sequence belongs to the bacterial ribosomal protein bL19 family.

Functionally, this protein is located at the 30S-50S ribosomal subunit interface and may play a role in the structure and function of the aminoacyl-tRNA binding site. The chain is Large ribosomal subunit protein bL19 from Xanthomonas oryzae pv. oryzae (strain KACC10331 / KXO85).